The primary structure comprises 764 residues: Ergosteryl-beta-glucosidase (764 aa).

Glu515 acts as the Nucleophile in catalysis. The interval 588-629 is disordered; the sequence is HDTRAKTPTPEPSPASTVASVSTSTSKSGSSQPPSFIKPDNH. At Thr594 the chain carries Phosphothreonine. Positions 601 to 622 are enriched in low complexity; the sequence is PASTVASVSTSTSKSGSSQPPS.

It belongs to the glycosyl hydrolase 5 (cellulase A) family.

It localises to the cytoplasm. It is found in the cytosol. The protein resides in the vacuole membrane. The enzyme catalyses ergosteryl 3-beta-D-glucoside + H2O = ergosterol + D-glucose. Ergosteryl beta-glucosidase involved in the ergosteryl beta-glucoside (EG) catabolic pathway and vacuole formation via hydrolysis of EG to generate glucose. Is also able to hydrolyze cholesteryl beta-glucoside and sitosteryl beta-glucoside to generate glucose; and C6-7-nitro-2,1,3-benzoxadiazole (NBD)-GlcCer to generate C6-NBD-ceramide (Cer). This is Ergosteryl-beta-glucosidase from Saccharomyces cerevisiae (strain ATCC 204508 / S288c) (Baker's yeast).